The primary structure comprises 196 residues: Histone H1.0-B (196 aa).

2 disordered regions span residues 1-29 (MAEN…PKYS) and 86-196 (GVGA…GRKK). Positions 24–97 (DHPKYSDMIL…GASGSFRLAK (74 aa)) constitute an H15 domain. Basic residues predominate over residues 104–196 (PAKKPKKEIK…ASPKKSGRKK (93 aa)).

The protein belongs to the histone H1/H5 family.

It is found in the nucleus. It localises to the chromosome. Its function is as follows. Histones H1 are necessary for the condensation of nucleosome chains into higher-order structures. The histones H1.0 are found in cells that are in terminal stages of differentiation or that have low rates of cell division. The sequence is that of Histone H1.0-B (h1-0-b) from Xenopus laevis (African clawed frog).